The primary structure comprises 459 residues: Bifunctional protein GlmU (459 aa).

The pyrophosphorylase stretch occupies residues 1–230 (MSNRFAVILA…FDETLGVNDR (230 aa)). Residues 9-12 (LAAG), Lys23, Gln73, and 78-79 (GT) contribute to the UDP-N-acetyl-alpha-D-glucosamine site. Asp103 serves as a coordination point for Mg(2+). 4 residues coordinate UDP-N-acetyl-alpha-D-glucosamine: Gly140, Glu155, Asn170, and Asn228. Asn228 contributes to the Mg(2+) binding site. Residues 231–251 (VALSQAEIIMKNRINRKNMVN) are linker. The tract at residues 252-459 (GVTIIDPSNT…VDQLLNKKKS (208 aa)) is N-acetyltransferase. The UDP-N-acetyl-alpha-D-glucosamine site is built by Arg333 and Lys351. His363 (proton acceptor) is an active-site residue. Residues Tyr366 and Asn377 each coordinate UDP-N-acetyl-alpha-D-glucosamine. Residues 386–387 (NY), Ala423, and Arg440 each bind acetyl-CoA.

It in the N-terminal section; belongs to the N-acetylglucosamine-1-phosphate uridyltransferase family. This sequence in the C-terminal section; belongs to the transferase hexapeptide repeat family. As to quaternary structure, homotrimer. The cofactor is Mg(2+).

It is found in the cytoplasm. It catalyses the reaction alpha-D-glucosamine 1-phosphate + acetyl-CoA = N-acetyl-alpha-D-glucosamine 1-phosphate + CoA + H(+). The catalysed reaction is N-acetyl-alpha-D-glucosamine 1-phosphate + UTP + H(+) = UDP-N-acetyl-alpha-D-glucosamine + diphosphate. It participates in nucleotide-sugar biosynthesis; UDP-N-acetyl-alpha-D-glucosamine biosynthesis; N-acetyl-alpha-D-glucosamine 1-phosphate from alpha-D-glucosamine 6-phosphate (route II): step 2/2. Its pathway is nucleotide-sugar biosynthesis; UDP-N-acetyl-alpha-D-glucosamine biosynthesis; UDP-N-acetyl-alpha-D-glucosamine from N-acetyl-alpha-D-glucosamine 1-phosphate: step 1/1. The protein operates within bacterial outer membrane biogenesis; LPS lipid A biosynthesis. Catalyzes the last two sequential reactions in the de novo biosynthetic pathway for UDP-N-acetylglucosamine (UDP-GlcNAc). The C-terminal domain catalyzes the transfer of acetyl group from acetyl coenzyme A to glucosamine-1-phosphate (GlcN-1-P) to produce N-acetylglucosamine-1-phosphate (GlcNAc-1-P), which is converted into UDP-GlcNAc by the transfer of uridine 5-monophosphate (from uridine 5-triphosphate), a reaction catalyzed by the N-terminal domain. This Bacillus thuringiensis subsp. konkukian (strain 97-27) protein is Bifunctional protein GlmU.